The chain runs to 382 residues: Methylthioribose-1-phosphate isomerase (382 aa).

Asp258 serves as the catalytic Proton donor.

Belongs to the eIF-2B alpha/beta/delta subunits family. MtnA subfamily.

It is found in the cytoplasm. The protein localises to the nucleus. The enzyme catalyses 5-(methylsulfanyl)-alpha-D-ribose 1-phosphate = 5-(methylsulfanyl)-D-ribulose 1-phosphate. It functions in the pathway amino-acid biosynthesis; L-methionine biosynthesis via salvage pathway; L-methionine from S-methyl-5-thio-alpha-D-ribose 1-phosphate: step 1/6. Catalyzes the interconversion of methylthioribose-1-phosphate (MTR-1-P) into methylthioribulose-1-phosphate (MTRu-1-P). The protein is Methylthioribose-1-phosphate isomerase of Laccaria bicolor (strain S238N-H82 / ATCC MYA-4686) (Bicoloured deceiver).